A 368-amino-acid chain; its full sequence is Glutamate 5-kinase (368 aa).

Lys9 contacts ATP. Substrate contacts are provided by Ser49, Asp136, and Asn148. ATP-binding positions include 168–169 (TD) and 210–216 (TGGMMTK). A PUA domain is found at 275-353 (AGIITIDNGA…ADIENVLGYE (79 aa)).

The protein belongs to the glutamate 5-kinase family.

The protein localises to the cytoplasm. It carries out the reaction L-glutamate + ATP = L-glutamyl 5-phosphate + ADP. It participates in amino-acid biosynthesis; L-proline biosynthesis; L-glutamate 5-semialdehyde from L-glutamate: step 1/2. Catalyzes the transfer of a phosphate group to glutamate to form L-glutamate 5-phosphate. This is Glutamate 5-kinase from Haemophilus influenzae (strain PittGG).